The sequence spans 322 residues: GATA transcription factor 8 (322 aa).

Residues 93–168 form a disordered region; the sequence is TLVEKKEDSF…DKDRVKDNVC (76 aa). A compositionally biased stretch (low complexity) spans 102–141; that stretch reads FSTNTDSSSSHSQFRSSSPVSVLESSSSSSQTTNTTSLVL. The span at 144–154 shows a compositional bias: basic residues; sequence KHGRPRTKRPR. A Nuclear localization signal motif is present at residues 147–154; that stretch reads RPRTKRPR. The GATA-type zinc finger occupies 225–279; that stretch reads QYPLRKCMHCEVTKTPQWRLGPMGPKTLCNACGVRYKSGRLFPEYRPAASPTFTP.

The protein belongs to the type IV zinc-finger family. Class A subfamily.

Its subcellular location is the nucleus. Its function is as follows. Transcriptional activator that specifically binds 5'-GATA-3' or 5'-GAT-3' motifs within gene promoters. May be involved in the regulation of some light-responsive genes. This Arabidopsis thaliana (Mouse-ear cress) protein is GATA transcription factor 8 (GATA8).